A 340-amino-acid polypeptide reads, in one-letter code: MSIDLDWDGMINSDEIDVAEWLRSLLDKQFQQLDLPRNIRSVSITTLSLGTIPPELEIKHISDPFPEFYAEEEAAADSHYLPPLHPPQQRRSAPSTPHIHTNTTNPIDRGIASYFHPLGSAPLMSGLRTPLNIPSWATNGHTRTSSRLPLNTPIEAEIVESVRESTAPRTPEEREQQPVPEDREDDLQVLFRVKYTGDIRIGVEATLRLNYPSDDVVLLPMKLHLSHININSLAIMAYIKKSIYLSVICDLDDSDHAVARTGRERLDIIRDVKIDSEIGHHDTNGAALRNVGKVDRFIVDKIRSLLKAEIAWPSWIKVSMEDEDSDDEEGEEEGDQEDEH.

Residues 1 to 321 (MSIDLDWDGM…WPSWIKVSME (321 aa)) form the SMP-LTD domain. Disordered stretches follow at residues 79 to 107 (HYLP…TNPI), 161 to 184 (SVRE…EDRE), and 319 to 340 (SMED…EDEH). Over residues 89–106 (QRRSAPSTPHIHTNTTNP) the composition is skewed to polar residues. Residues 321–340 (EDEDSDDEEGEEEGDQEDEH) are compositionally biased toward acidic residues.

Belongs to the MDM12 family. As to quaternary structure, component of the ER-mitochondria encounter structure (ERMES) or MDM complex, composed of MMM1, MDM10, MDM12 and MDM34. An MMM1 homodimer associates with one molecule of MDM12 on each side in a pairwise head-to-tail manner, and the SMP-LTD domains of MMM1 and MDM12 generate a continuous hydrophobic tunnel for phospholipid trafficking.

The protein resides in the mitochondrion outer membrane. The protein localises to the endoplasmic reticulum membrane. Functionally, component of the ERMES/MDM complex, which serves as a molecular tether to connect the endoplasmic reticulum (ER) and mitochondria. Components of this complex are involved in the control of mitochondrial shape and protein biogenesis, and function in nonvesicular lipid trafficking between the ER and mitochondria. MDM12 is required for the interaction of the ER-resident membrane protein MMM1 and the outer mitochondrial membrane-resident beta-barrel protein MDM10. The MDM12-MMM1 subcomplex functions in the major beta-barrel assembly pathway that is responsible for biogenesis of all mitochondrial outer membrane beta-barrel proteins, and acts in a late step after the SAM complex. The MDM10-MDM12-MMM1 subcomplex further acts in the TOM40-specific pathway after the action of the MDM12-MMM1 complex. Essential for establishing and maintaining the structure of mitochondria and maintenance of mtDNA nucleoids. The chain is Mitochondrial distribution and morphology protein 12 from Yarrowia lipolytica (strain CLIB 122 / E 150) (Yeast).